Reading from the N-terminus, the 829-residue chain is Periplasmic nitrate reductase (829 aa).

The tat-type signal signal peptide spans M1 to A30. Positions I41 to D97 constitute a 4Fe-4S Mo/W bis-MGD-type domain. 4 residues coordinate [4Fe-4S] cluster: C48, C51, C55, and C83. Mo-bis(molybdopterin guanine dinucleotide) contacts are provided by residues K85, Q152, N177, C181, W214–M221, S245–H249, Q264–D266, M374, Q378, N484, S510–D511, K533, D560, and T719–T728. F795 is a substrate binding site. Positions 803 and 820 each coordinate Mo-bis(molybdopterin guanine dinucleotide).

Belongs to the prokaryotic molybdopterin-containing oxidoreductase family. NasA/NapA/NarB subfamily. Component of the periplasmic nitrate reductase NapAB complex composed of NapA and NapB. [4Fe-4S] cluster is required as a cofactor. The cofactor is Mo-bis(molybdopterin guanine dinucleotide). Post-translationally, predicted to be exported by the Tat system. The position of the signal peptide cleavage has not been experimentally proven.

Its subcellular location is the periplasm. The enzyme catalyses 2 Fe(II)-[cytochrome] + nitrate + 2 H(+) = 2 Fe(III)-[cytochrome] + nitrite + H2O. Its function is as follows. Catalytic subunit of the periplasmic nitrate reductase complex NapAB. Receives electrons from NapB and catalyzes the reduction of nitrate to nitrite. The sequence is that of Periplasmic nitrate reductase from Aeromonas hydrophila subsp. hydrophila (strain ATCC 7966 / DSM 30187 / BCRC 13018 / CCUG 14551 / JCM 1027 / KCTC 2358 / NCIMB 9240 / NCTC 8049).